We begin with the raw amino-acid sequence, 184 residues long: Small ribosomal subunit protein bS16 (184 aa).

Residues 150–160 (KKAAEAAEKAA) are compositionally biased toward basic and acidic residues. A disordered region spans residues 150 to 184 (KKAAEAAEKAAAEAPAEEATEAPAEEAAATEAAAE). A compositionally biased stretch (acidic residues) spans 164–173 (PAEEATEAPA). Residues 174–184 (EEAAATEAAAE) show a composition bias toward low complexity.

It belongs to the bacterial ribosomal protein bS16 family.

The protein is Small ribosomal subunit protein bS16 of Bacteroides thetaiotaomicron (strain ATCC 29148 / DSM 2079 / JCM 5827 / CCUG 10774 / NCTC 10582 / VPI-5482 / E50).